The primary structure comprises 270 residues: Multi-heme protein MamP (270 aa).

Over methionine 1 to valine 6 the chain is Cytoplasmic. Over leucine 7–isoleucine 20 the chain traverses the membrane. Over glycine 21–asparagine 270 the chain is Lumenal. The tract at residues asparagine 84–glycine 201 is PDZ. An MCR (magnetochrome) 1 motif is present at residues isoleucine 205–valine 225. Residues cysteine 219, cysteine 222, histidine 223, cysteine 263, cysteine 266, and histidine 267 each contribute to the heme site. The MCR 2 signature appears at isoleucine 245–isoleucine 269.

Belongs to the magnetosome MamP family. In terms of assembly, homodimer. The cofactor is heme. In terms of processing, subject to proteolytic cleavage which requires both MamE and MamO.

It localises to the cell inner membrane. Involved in redox-control of magnetite formation. Oxidizes Fe(2+) at alkaline pH; successively forms ferrihydrite (Fe(3+)(2)O(3) 0.5 H(2)O) then magnetite (Fe(3)O(4)) from an Fe(2+) solution. The chain is Multi-heme protein MamP from Magnetospirillum gryphiswaldense (strain DSM 6361 / JCM 21280 / NBRC 15271 / MSR-1).